Reading from the N-terminus, the 275-residue chain is 4,5-DOPA dioxygenase extradiol 1 (275 aa).

Zn(2+) contacts are provided by H22, H60, H182, and H236.

The protein belongs to the DODA-type extradiol aromatic ring-opening dioxygenase family. Requires Zn(2+) as cofactor.

The enzyme catalyses L-dopa + O2 = 4-(L-alanin-3-yl)-2-hydroxy-cis,cis-muconate 6-semialdehyde + H(+). It functions in the pathway pigment biosynthesis; betalain biosynthesis. Functionally, opens the cyclic ring of dihydroxy-phenylalanine (DOPA) between carbons 4 and 5, thus producing an unstable seco-DOPA that rearranges nonenzymatically to betalamic acid. The protein is 4,5-DOPA dioxygenase extradiol 1 of Beta vulgaris (Sugar beet).